A 415-amino-acid chain; its full sequence is Putative FNIP repeat-containing protein L415 (415 aa).

An FNIP repeat occupies 148-185 (FIKKGAIPDSVTHLYFGSDYLSKDIIPKNVVYLRFGDF).

The sequence is that of Putative FNIP repeat-containing protein L415 from Acanthamoeba polyphaga mimivirus (APMV).